We begin with the raw amino-acid sequence, 208 residues long: Small ribosomal subunit protein uS4 (208 aa).

Residues 98–159 (RRLDNVIYRL…KSRTVAVITN (62 aa)) form the S4 RNA-binding domain.

It belongs to the universal ribosomal protein uS4 family. Part of the 30S ribosomal subunit. Contacts protein S5. The interaction surface between S4 and S5 is involved in control of translational fidelity.

One of the primary rRNA binding proteins, it binds directly to 16S rRNA where it nucleates assembly of the body of the 30S subunit. Functionally, with S5 and S12 plays an important role in translational accuracy. In Desulfatibacillum aliphaticivorans, this protein is Small ribosomal subunit protein uS4.